We begin with the raw amino-acid sequence, 258 residues long: Imidazole glycerol phosphate synthase subunit HisF (258 aa).

Residues Asp-11 and Asp-130 contribute to the active site.

It belongs to the HisA/HisF family. As to quaternary structure, heterodimer of HisH and HisF.

It is found in the cytoplasm. The catalysed reaction is 5-[(5-phospho-1-deoxy-D-ribulos-1-ylimino)methylamino]-1-(5-phospho-beta-D-ribosyl)imidazole-4-carboxamide + L-glutamine = D-erythro-1-(imidazol-4-yl)glycerol 3-phosphate + 5-amino-1-(5-phospho-beta-D-ribosyl)imidazole-4-carboxamide + L-glutamate + H(+). The protein operates within amino-acid biosynthesis; L-histidine biosynthesis; L-histidine from 5-phospho-alpha-D-ribose 1-diphosphate: step 5/9. Functionally, IGPS catalyzes the conversion of PRFAR and glutamine to IGP, AICAR and glutamate. The HisF subunit catalyzes the cyclization activity that produces IGP and AICAR from PRFAR using the ammonia provided by the HisH subunit. In Methylobacterium sp. (strain 4-46), this protein is Imidazole glycerol phosphate synthase subunit HisF.